The sequence spans 215 residues: Tricarboxylate transporter ALT9 (215 aa).

Solcar repeat units follow at residues 18–106 (TTVV…LAPM) and 111–197 (CGVS…VVRL). 3 helical membrane-spanning segments follow: residues 19–39 (TVVG…VLVL), 112–132 (GVST…YCTM), and 182–202 (VAGA…GFLV).

The protein belongs to the mitochondrial carrier (TC 2.A.29) family.

It localises to the mitochondrion inner membrane. It functions in the pathway mycotoxin biosynthesis. Tricarboxylate transporter; part of the gene cluster that mediates the biosynthesis of the host-selective toxins (HSTs) AAL-toxins, sphinganine-analog mycotoxins responsible for Alternaria stem canker on tomato by the tomato pathotype. The biosynthesis starts with the polyketide synthase ALT1-catalyzed C-16 carbon chain assembly from one starter acetyl-CoA unit with malonyl-CoA extender units. ALT1 also selectively transfers methyl groups at the first and the third cycle of chain elongation for AAL toxin. The C-16 polyketide chain is released from the enzyme by a nucleophilic attack of a carbanion, which is derived from R-carbon of glycin by decarboxylation, on the carbonyl carbon of polyketide acyl chain. This step is probably catalyzed by a pyridoxal 5'-phosphate-dependent aminoacyl transferase ALT4. The respective functions of the other enzymes encoded by the cluster have still to be elucidated. The sphingosine N-acyltransferase-like protein ALT7 seems not to act as a resistance/self-tolerance factor against the toxin in the toxin biosynthetic gene cluster, contrary to what is expected. The polypeptide is Tricarboxylate transporter ALT9 (Alternaria alternata (Alternaria rot fungus)).